The sequence spans 356 residues: DNA polymerase IV (356 aa).

The 188-residue stretch at 1–188 (MDTSRKIIHI…IPVTKFYGVG (188 aa)) folds into the UmuC domain. Mg(2+) is bound by residues aspartate 11 and aspartate 106. Glutamate 107 is a catalytic residue.

It belongs to the DNA polymerase type-Y family. Monomer. Mg(2+) serves as cofactor.

It is found in the cytoplasm. The enzyme catalyses DNA(n) + a 2'-deoxyribonucleoside 5'-triphosphate = DNA(n+1) + diphosphate. Its function is as follows. Poorly processive, error-prone DNA polymerase involved in untargeted mutagenesis. Copies undamaged DNA at stalled replication forks, which arise in vivo from mismatched or misaligned primer ends. These misaligned primers can be extended by PolIV. Exhibits no 3'-5' exonuclease (proofreading) activity. May be involved in translesional synthesis, in conjunction with the beta clamp from PolIII. The chain is DNA polymerase IV from Listeria monocytogenes serotype 4b (strain F2365).